We begin with the raw amino-acid sequence, 140 residues long: Glycine cleavage system H protein (140 aa).

Positions 22–104 constitute a Lipoyl-binding domain; the sequence is EVVIGITRFA…YGKGWMLRLK (83 aa). An N6-lipoyllysine modification is found at Lys63.

Belongs to the GcvH family. The glycine cleavage system is composed of four proteins: P, T, L and H. (R)-lipoate serves as cofactor.

Its function is as follows. The glycine cleavage system catalyzes the degradation of glycine. The H protein shuttles the methylamine group of glycine from the P protein to the T protein. This is Glycine cleavage system H protein from Magnetococcus marinus (strain ATCC BAA-1437 / JCM 17883 / MC-1).